The chain runs to 214 residues: Charged multivesicular body protein 2b (214 aa).

Residues 25-55 (QRQIARDRTALEKQEKQLEMEIKKMAKTGNR) are a coiled coil. Residues 178–199 (MAHAPSAARKTPSAATAKADGI) are disordered. Positions 202–212 (EDIERQLKALG) match the MIT-interacting motif motif.

It belongs to the SNF7 family. As to quaternary structure, probable core component of the endosomal sorting required for transport complex III (ESCRT-III). ESCRT-III components are thought to multimerize to form a flat lattice on the perimeter membrane of the endosome.

It is found in the cytoplasm. It localises to the cytosol. Its subcellular location is the late endosome membrane. In terms of biological role, probable core component of the endosomal sorting required for transport complex III (ESCRT-III) which is involved in multivesicular bodies (MVBs) formation and sorting of endosomal cargo proteins into MVBs. MVBs contain intraluminal vesicles (ILVs) that are generated by invagination and scission from the limiting membrane of the endosome and mostly are delivered to lysosomes enabling degradation of membrane proteins, such as stimulated growth factor receptors, lysosomal enzymes and lipids. This chain is Charged multivesicular body protein 2b (chmp2b), found in Danio rerio (Zebrafish).